The sequence spans 327 residues: Thiosulfate dehydrogenase (327 aa).

The signal sequence occupies residues 1-26 (MKIIPYRKRSVLIATIFAISAVGITG). A compositionally biased stretch (low complexity) spans 66–78 (NDMTATAGGTDTA). Residues 66 to 93 (NDMTATAGGTDTASGKPTIKMPDESTIP) form a disordered region. 2 consecutive Cytochrome c domains span residues 99-196 (AAVR…SWLS) and 219-305 (PNTD…THLP). Residues cysteine 125, cysteine 128, histidine 129, cysteine 232, cysteine 235, and histidine 236 each coordinate heme c.

Monomer. Post-translationally, binds 2 heme c groups covalently per subunit.

It localises to the periplasm. It catalyses the reaction 2 thiosulfate + 2 Fe(III)-[cytochrome c] = tetrathionate + 2 Fe(II)-[cytochrome c] + 2 H(+). Its function is as follows. Catalyzes the oxidation of 2 molecules of thiosulfate to tetrathionate. This Psychrobacter arcticus (strain DSM 17307 / VKM B-2377 / 273-4) protein is Thiosulfate dehydrogenase (tsdA).